The following is a 158-amino-acid chain: Snaclec coagulation factor X-activating enzyme light chain 2 (158 aa).

The N-terminal stretch at 1–23 is a signal peptide; the sequence is MGRSISVSFGLLAVFLSLSGTGA. Intrachain disulfides connect cysteine 27–cysteine 38, cysteine 55–cysteine 152, and cysteine 127–cysteine 144. The 120-residue stretch at 34 to 153 folds into the C-type lectin domain; the sequence is YRYFCYRVFK…CEEPYPFVCK (120 aa).

It belongs to the snaclec family. As to quaternary structure, heterotrimer; disulfide-linked. The heterotrimer consists of 1 heavy chain (a metalloproteinase) and 2 light chains: LC1 and LC2. As to expression, expressed by the venom gland.

It localises to the secreted. Regulatory subunit of the blood coagulation factor X-activating enzyme. Activates coagulation factor X (F10) by cleaving the Arg-Ile bond at position 234, activates coagulation factor IX (F9) by cleaving the Arg-Val bond at position 226 and is also able to activate protein C (PROC). May serve as an exosite by which the enzyme recognizes and binds to the Gla domain of factor X (F10) in a calcium-dependent manner. The chain is Snaclec coagulation factor X-activating enzyme light chain 2 (LC2) from Macrovipera lebetinus (Levantine viper).